The following is a 202-amino-acid chain: Protein FAR-RED ELONGATED HYPOCOTYL 1 (202 aa).

S39 carries the phosphoserine modification. The Nuclear localization sequence (NLS) motif lies at 40-43; that stretch reads KKRK. The short motif at 54-57 is the Nuclear export sequence (NES) element; the sequence is LLPL. The residue at position 61 (T61) is a Phosphothreonine.

The protein belongs to the FHY1 protein family. Homodimer and heterodimer with FHL. Interacts with underphosphorylated PHYA, especially upon far-red (FR) light illumination. Binds to LAF1 and HFR1. Forms PHYA/FHY1/HFR1 complex in darkness but dissociates from PHYA and HFR1 in response to continuous FR light (FRc). In terms of processing, inactivated by rapid reversible PHYA-mediated phosphorylation at Ser-39 and Thr-61 in red light (R), thus inhibiting PHYA signaling in a negative feedback loop; this ensures the seedling deetiolation process in response to a R-enriched light condition. Subsequent exposure to far-red light (FR) after the R conditions leads to dephosphorylation. The phosphorylated form is cytoplasmic only and unable to bind to chromatin at direct target genes whereas the unphosphorylated form can shuttle from cytoplasm to nucleus. Expressed in hypocotyl cells of etiolated plants.

Its subcellular location is the nucleus. The protein resides in the cytoplasm. Key regulator of far red / red (FR/R) spectrum-specific responses essential for the adaption to changing light conditions (e.g. de-etiolation), essentially by regulating PHYA shuttling from the cytoplasm to the nucleus and by directly regulating the expression of some target genes, depending on light conditions and phosphorylation status. Binds chromatin at target genes promoters, especially in FR light conditions. Can activate transcription of different genes, some being in a phytochrome A (PHYA)-dependent and other in a PHYA-independent manners. Controls specific aspects of plant development, such as the inhibition of seed germination under FR during salt stress. Essential for light-regulated PHYA nuclear accumulation and subsequent PHYA phototropic signaling processes involved in photomorphogenesis. Mediates the association of PHYA with HFR1 and LAF1 in the nucleus in response to FR conditions. PHYA-specific signal transducer in response to continuous FR lights. Contributes to inhibition of hypocotyl elongation in continuous blue light (B). This chain is Protein FAR-RED ELONGATED HYPOCOTYL 1, found in Arabidopsis thaliana (Mouse-ear cress).